The following is a 156-amino-acid chain: Ribosomal RNA large subunit methyltransferase H (156 aa).

S-adenosyl-L-methionine-binding positions include L73, G104, and 123 to 128 (IGPLTL).

This sequence belongs to the RNA methyltransferase RlmH family. As to quaternary structure, homodimer.

It localises to the cytoplasm. It catalyses the reaction pseudouridine(1915) in 23S rRNA + S-adenosyl-L-methionine = N(3)-methylpseudouridine(1915) in 23S rRNA + S-adenosyl-L-homocysteine + H(+). Specifically methylates the pseudouridine at position 1915 (m3Psi1915) in 23S rRNA. This chain is Ribosomal RNA large subunit methyltransferase H, found in Xanthomonas oryzae pv. oryzae (strain MAFF 311018).